A 66-amino-acid polypeptide reads, in one-letter code: Probable cytochrome b-c1 complex subunit 9 (66 aa).

At 1 to 20 (MSNALTNIFYKYVARRNSTW) the chain is on the mitochondrial matrix side. A helical membrane pass occupies residues 21-46 (MAGAILGAFVLDSTVSGAVNTFFDSV). Over 47–66 (NKGKLWKDVYAERVKKGISQ) the chain is Mitochondrial intermembrane.

It belongs to the UQCR10/QCR9 family. In terms of assembly, component of the ubiquinol-cytochrome c oxidoreductase (cytochrome b-c1 complex, complex III, CIII), a multisubunit enzyme composed of 3 respiratory subunits cytochrome b, cytochrome c1 and Rieske protein, 2 core protein subunits, and additional low-molecular weight protein subunits. The complex exists as an obligatory dimer and forms supercomplexes (SCs) in the inner mitochondrial membrane with cytochrome c oxidase (complex IV, CIV).

Its subcellular location is the mitochondrion inner membrane. Functionally, component of the ubiquinol-cytochrome c oxidoreductase, a multisubunit transmembrane complex that is part of the mitochondrial electron transport chain which drives oxidative phosphorylation. The respiratory chain contains 3 multisubunit complexes succinate dehydrogenase (complex II, CII), ubiquinol-cytochrome c oxidoreductase (cytochrome b-c1 complex, complex III, CIII) and cytochrome c oxidase (complex IV, CIV), that cooperate to transfer electrons derived from NADH and succinate to molecular oxygen, creating an electrochemical gradient over the inner membrane that drives transmembrane transport and the ATP synthase. The cytochrome b-c1 complex catalyzes electron transfer from ubiquinol to cytochrome c, linking this redox reaction to translocation of protons across the mitochondrial inner membrane, with protons being carried across the membrane as hydrogens on the quinol. In the process called Q cycle, 2 protons are consumed from the matrix, 4 protons are released into the intermembrane space and 2 electrons are passed to cytochrome c. The sequence is that of Probable cytochrome b-c1 complex subunit 9 from Dictyostelium discoideum (Social amoeba).